The sequence spans 237 residues: Lycopene beta-cyclase (237 aa).

7 helical membrane passes run 3–23 (TSYL…LGVV), 38–58 (VGIL…YLIA), 80–100 (EYLF…ALPL), 113–133 (AVLG…LLTV), 137–157 (FYIG…WAVG), 170–192 (AAVL…DGIW), and 213–233 (AFFF…AWVL).

It belongs to the lycopene beta-cyclase family.

Its subcellular location is the cell membrane. It carries out the reaction a carotenoid psi-end group = a carotenoid beta-end derivative. The catalysed reaction is all-trans-lycopene = gamma-carotene. The enzyme catalyses gamma-carotene = all-trans-beta-carotene. The protein operates within carotenoid biosynthesis; beta-carotene biosynthesis. Functionally, catalyzes the cyclization of both ends of lycopene to form beta-carotene, a retinal precursor. Is required for bacteriorhodopsin biogenesis, a light-driven proton pump with a covalently bound retinal cofactor. This is Lycopene beta-cyclase from Halobacterium salinarum (strain ATCC 29341 / DSM 671 / R1).